The primary structure comprises 493 residues: Phospholipid transfer protein (493 aa).

An N-terminal signal peptide occupies residues 1–17 (MVLLWALFLALLAGAHA). 5 N-linked (GlcNAc...) asparagine glycosylation sites follow: Asn-64, Asn-91, Asn-94, Asn-117, and Asn-143. Cys-146 and Cys-185 form a disulfide bridge. Residues Asn-245 and Asn-398 are each glycosylated (N-linked (GlcNAc...) asparagine).

It belongs to the BPI/LBP/Plunc superfamily. BPI/LBP family. In terms of processing, glycosylation is necessary for secretion and its phospholipid transfer activity. As to expression, highest level expression in the lung, brain and heart with relatively low levels in the liver, skeletal muscle and testis and very low levels found in the spleen and kidney.

Its subcellular location is the secreted. The protein resides in the nucleus. The enzyme catalyses a 1,2-diacyl-sn-glycero-3-phosphocholine(in) = a 1,2-diacyl-sn-glycero-3-phosphocholine(out). It catalyses the reaction a 1,2-diacyl-sn-glycero-3-phosphoethanolamine(in) = a 1,2-diacyl-sn-glycero-3-phosphoethanolamine(out). It carries out the reaction a 1,2-diacyl-sn-glycerol(in) = a 1,2-diacyl-sn-glycerol(out). The catalysed reaction is a 1,2-diacyl-sn-glycero-3-phosphate(in) = a 1,2-diacyl-sn-glycero-3-phosphate(out). The enzyme catalyses a sphingomyelin(in) = a sphingomyelin(out). It catalyses the reaction a 1,2-diacyl-sn-glycero-3-phospho-(1'-sn-glycerol)(in) = a 1,2-diacyl-sn-glycero-3-phospho-(1'-sn-glycerol)(out). It carries out the reaction a 1,2-diacyl-sn-glycero-3-phospho-(1D-myo-inositol)(in) = a 1,2-diacyl-sn-glycero-3-phospho-(1D-myo-inositol)(out). The catalysed reaction is 1-hexadecanoyl-2-(5Z,8Z,11Z,14Z-eicosatetraenoyl)-sn-glycero-3-phosphoethanolamine(in) = 1-hexadecanoyl-2-(5Z,8Z,11Z,14Z-eicosatetraenoyl)-sn-glycero-3-phosphoethanolamine(out). The enzyme catalyses N-(hexadecanoyl)-sphing-4-enine-1-phosphocholine(in) = N-(hexadecanoyl)-sphing-4-enine-1-phosphocholine(out). It catalyses the reaction 1,2-dihexadecanoyl-sn-glycero-3-phosphocholine(in) = 1,2-dihexadecanoyl-sn-glycero-3-phosphocholine(out). Its function is as follows. Mediates the transfer of phospholipids and free cholesterol from triglyceride-rich lipoproteins (low density lipoproteins or LDL and very low density lipoproteins or VLDL) into high-density lipoproteins (HDL) as well as the exchange of phospholipids between triglyceride-rich lipoproteins themselves. Facilitates the transfer of a spectrum of different lipid molecules, including sphingomyelin, phosphatidylcholine, phosphatidylinositol, phosphatidylglycerol, and phosphatidyl ethanolamine. Plays an important role in HDL remodeling which involves modulating the size and composition of HDL. Also plays a key role in the uptake of cholesterol from peripheral cells and tissues that is subsequently transported to the liver for degradation and excretion. Two distinct forms of PLTP exist in plasma: an active form that can transfer phosphatidylcholine from phospholipid vesicles to HDL, and an inactive form that lacks this capability. The polypeptide is Phospholipid transfer protein (Pltp) (Mus musculus (Mouse)).